The following is a 209-amino-acid chain: V-type ATP synthase subunit D (209 aa).

It belongs to the V-ATPase D subunit family.

Its function is as follows. Produces ATP from ADP in the presence of a proton gradient across the membrane. The chain is V-type ATP synthase subunit D from Anaeromyxobacter sp. (strain K).